Consider the following 202-residue polypeptide: Adenylyl-sulfate kinase (202 aa).

Residue 31-38 participates in ATP binding; the sequence is GLSASGKS. Ser-105 (phosphoserine intermediate) is an active-site residue.

It belongs to the APS kinase family.

The enzyme catalyses adenosine 5'-phosphosulfate + ATP = 3'-phosphoadenylyl sulfate + ADP + H(+). It functions in the pathway sulfur metabolism; hydrogen sulfide biosynthesis; sulfite from sulfate: step 2/3. In terms of biological role, catalyzes the synthesis of activated sulfate. In Saccharomyces pastorianus (Lager yeast), this protein is Adenylyl-sulfate kinase (MET14).